We begin with the raw amino-acid sequence, 267 residues long: 4-hydroxy-tetrahydrodipicolinate reductase (267 aa).

Residues 8-13 (GAAGRM) and D34 contribute to the NAD(+) site. R35 contributes to the NADP(+) binding site. NAD(+) is bound by residues 98–100 (GTT) and 122–125 (AANF). H155 functions as the Proton donor/acceptor in the catalytic mechanism. H156 serves as a coordination point for (S)-2,3,4,5-tetrahydrodipicolinate. Residue K159 is the Proton donor of the active site. (S)-2,3,4,5-tetrahydrodipicolinate is bound at residue 165-166 (GT).

It belongs to the DapB family.

It localises to the cytoplasm. The catalysed reaction is (S)-2,3,4,5-tetrahydrodipicolinate + NAD(+) + H2O = (2S,4S)-4-hydroxy-2,3,4,5-tetrahydrodipicolinate + NADH + H(+). It catalyses the reaction (S)-2,3,4,5-tetrahydrodipicolinate + NADP(+) + H2O = (2S,4S)-4-hydroxy-2,3,4,5-tetrahydrodipicolinate + NADPH + H(+). It functions in the pathway amino-acid biosynthesis; L-lysine biosynthesis via DAP pathway; (S)-tetrahydrodipicolinate from L-aspartate: step 4/4. In terms of biological role, catalyzes the conversion of 4-hydroxy-tetrahydrodipicolinate (HTPA) to tetrahydrodipicolinate. This Pseudomonas putida (strain GB-1) protein is 4-hydroxy-tetrahydrodipicolinate reductase.